The primary structure comprises 362 residues: ATP synthase F(1) complex catalytic subunit beta, mitochondrial (362 aa).

Position 14 is an N6-acetyllysine; alternate (K14). K14 carries the post-translational modification N6-succinyllysine; alternate. An N6-acetyllysine modification is found at K51. ADP is bound by residues V62, V63, G64, K65, T66, and V67. V62 is an ATP binding site. Phosphate contacts are provided by V62, V63, G64, K65, and T66. Residues G64, K65, T66, and V67 each coordinate ATP. Residue T66 coordinates Mg(2+). Residue E91 coordinates Mg(2+). N6-acetyllysine; alternate occurs at positions 112 and 117. Residues K112 and K117 each carry the N6-succinyllysine; alternate modification. T165 bears the Phosphothreonine mark. At K279 the chain carries N6-acetyllysine. Residue S286 is modified to Phosphoserine. N6-acetyllysine occurs at positions 333 and 338.

Belongs to the ATPase alpha/beta chains family. As to quaternary structure, homotrimer. Component of the ATP synthase complex composed at least of ATP5F1A/subunit alpha, ATP5F1B/subunit beta, ATP5MC1/subunit c (homooctomer), MT-ATP6/subunit a, MT-ATP8/subunit 8, ATP5ME/subunit e, ATP5MF/subunit f, ATP5MG/subunit g, ATP5MK/subunit k, ATP5MJ/subunit j, ATP5F1C/subunit gamma, ATP5F1D/subunit delta, ATP5F1E/subunit epsilon, ATP5PF/subunit F6, ATP5PB/subunit b, ATP5PD/subunit d, ATP5PO/subunit OSCP. ATP synthase complex consists of a soluble F(1) head domain (subunits alpha(3) and beta(3)) - the catalytic core - and a membrane F(0) domain - the membrane proton channel (subunits c, a, 8, e, f, g, k and j). These two domains are linked by a central stalk (subunits gamma, delta, and epsilon) rotating inside the F1 region and a stationary peripheral stalk (subunits F6, b, d, and OSCP). Interacts with PPIF. Interacts with BCL2L1 isoform BCL-X(L); the interaction mediates the association of BCL2L1 isoform BCL-X(L) with the mitochondrial membrane F(1)F(0) ATP synthase and enhances neurons metabolic efficiency. Interacts with CLN5 and PPT1. Interacts with S100A1; this interaction increases F1-ATPase activity. Interacts with MTLN. Interacts with TTC5/STRAP; the interaction results in decreased mitochondrial ATP production.

It is found in the mitochondrion inner membrane. It carries out the reaction ATP + H2O + 4 H(+)(in) = ADP + phosphate + 5 H(+)(out). Catalytic subunit beta, of the mitochondrial membrane ATP synthase complex (F(1)F(0) ATP synthase or Complex V) that produces ATP from ADP in the presence of a proton gradient across the membrane which is generated by electron transport complexes of the respiratory chain. ATP synthase complex consist of a soluble F(1) head domain - the catalytic core - and a membrane F(1) domain - the membrane proton channel. These two domains are linked by a central stalk rotating inside the F(1) region and a stationary peripheral stalk. During catalysis, ATP synthesis in the catalytic domain of F(1) is coupled via a rotary mechanism of the central stalk subunits to proton translocation. In vivo, can only synthesize ATP although its ATP hydrolase activity can be activated artificially in vitro. With the subunit alpha (ATP5F1A), forms the catalytic core in the F(1) domain. The polypeptide is ATP synthase F(1) complex catalytic subunit beta, mitochondrial (Mesocricetus auratus (Golden hamster)).